A 216-amino-acid chain; its full sequence is Probable phosphatase SPAC513.02 (216 aa).

Catalysis depends on His-15, which acts as the Tele-phosphohistidine intermediate.

This sequence belongs to the phosphoglycerate mutase family. BPG-dependent PGAM subfamily.

It is found in the cytoplasm. The protein localises to the nucleus. The polypeptide is Probable phosphatase SPAC513.02 (Schizosaccharomyces pombe (strain 972 / ATCC 24843) (Fission yeast)).